A 427-amino-acid polypeptide reads, in one-letter code: Peptidase B (427 aa).

Residues Lys195 and Asp200 each coordinate Mn(2+). Lys207 is an active-site residue. Mn(2+)-binding residues include Asp218, Asp277, and Glu279. Arg281 is a catalytic residue.

This sequence belongs to the peptidase M17 family. In terms of assembly, homohexamer. The cofactor is Mn(2+).

The protein resides in the cytoplasm. It catalyses the reaction Release of an N-terminal amino acid, Xaa, from a peptide or arylamide. Xaa is preferably Glu or Asp but may be other amino acids, including Leu, Met, His, Cys and Gln.. Functionally, probably plays an important role in intracellular peptide degradation. The sequence is that of Peptidase B from Salmonella choleraesuis (strain SC-B67).